Here is a 216-residue protein sequence, read N- to C-terminus: MSFKNPVLGLCQQAAFMLSAARVDQCPADDGLEVAFAGRSNAGKSSALNTLTHANLARTSKTPGRTQLLNFFRLDDRRRLVDLPGYGYAKVPIPLKQHWQHHLEAYLGSRRSLAGVVLLMDIRHPLTDFDRMMLDWAGASGMPMHILLTKADKLAFGAAKNALLKVRREIHKGWGEGMSVQLFSAPKRQGVEEAHDVLARWLGLAGDDGGEADAGA.

The EngB-type G domain maps to 30-204 (DGLEVAFAGR…HDVLARWLGL (175 aa)). GTP-binding positions include 38–45 (GRSNAGKS), 64–68 (GRTQL), 82–85 (DLPG), 149–152 (TKAD), and 182–185 (LFSA). Residues Ser-45 and Thr-66 each contribute to the Mg(2+) site.

It belongs to the TRAFAC class TrmE-Era-EngA-EngB-Septin-like GTPase superfamily. EngB GTPase family. It depends on Mg(2+) as a cofactor.

In terms of biological role, necessary for normal cell division and for the maintenance of normal septation. The polypeptide is Probable GTP-binding protein EngB (Azotobacter vinelandii (strain DJ / ATCC BAA-1303)).